The chain runs to 85 residues: Conotoxin Cap15a (85 aa).

The signal sequence occupies residues 1-23; the sequence is MEKLTFLILVATVLLTIHVLVQS. The propeptide occupies 24–49; sequence VGDKHLKRRPKQYATKHLSALMRGHR. Gln50 bears the Pyrrolidone carboxylic acid mark.

This sequence belongs to the conotoxin O2 superfamily. Contains 4 disulfide bonds. As to expression, expressed by the venom duct.

It localises to the secreted. The polypeptide is Conotoxin Cap15a (Conus capitaneus (Captain cone)).